A 527-amino-acid chain; its full sequence is Catalase (527 aa).

Over residues 1 to 22 (MADNRDPASDQMKHWKEQRAAQ) the composition is skewed to basic and acidic residues. The disordered stretch occupies residues 1-42 (MADNRDPASDQMKHWKEQRAAQKPDVLTTGGGNPVGDKLNSL). Ala2 carries the blocked amino end (Ala); alternate modification. Ala2 carries the post-translational modification N-acetylalanine; alternate. Ser9 bears the Phosphoserine mark. An N6-succinyllysine modification is found at Lys13. Catalysis depends on residues His75 and Asn148. NADP(+) contacts are provided by His194, Phe198, Ser201, Arg203, Asn213, and Tyr215. Lys221 bears the N6-succinyllysine mark. Lys233 is modified (N6-acetyllysine). NADP(+) contacts are provided by Lys237, Trp303, and His305. Residue Tyr358 participates in heme binding. Phosphoserine occurs at positions 417 and 434. Positions 442, 445, and 446 each coordinate NADP(+). 2 positions are modified to N6-acetyllysine; alternate: Lys449 and Lys480. An N6-succinyllysine; alternate mark is found at Lys449 and Lys480. Lys499 carries the post-translational modification N6-acetyllysine. Residue Thr511 is modified to Phosphothreonine. A Phosphoserine modification is found at Ser517. The short motif at 524–527 (KANL) is the Microbody targeting signal; atypical element.

The protein belongs to the catalase family. In terms of assembly, homotetramer. Interacts (via microbody targeting signal) with PEX5, monomeric form interacts with PEX5, leading to its translocation into peroxisomes. Heme is required as a cofactor. The cofactor is NADP(+).

Its subcellular location is the peroxisome matrix. The catalysed reaction is 2 H2O2 = O2 + 2 H2O. Catalyzes the degradation of hydrogen peroxide (H(2)O(2)) generated by peroxisomal oxidases to water and oxygen, thereby protecting cells from the toxic effects of hydrogen peroxide. Promotes growth of cells including T-cells, B-cells, myeloid leukemia cells, melanoma cells, mastocytoma cells and normal and transformed fibroblast cells. In Bos taurus (Bovine), this protein is Catalase (CAT).